We begin with the raw amino-acid sequence, 411 residues long: Zinc finger protein draculin (411 aa).

Residues 1–33 (MKNTTKPCRTEHHNAEGQRDRMEGNKKGETKAK) are disordered. A compositionally biased stretch (basic and acidic residues) spans 8 to 32 (CRTEHHNAEGQRDRMEGNKKGETKA). 13 C2H2-type zinc fingers span residues 36–58 (VACSHCKKRFSHKAHLQIHMRVH), 64–86 (YRCDQCGKCFPYKQSLKLHLDIH), 92–114 (YTCDECGESFKTRLQLRSHMTLH), 120–142 (YKCDQCEKSYGREDHLQRHMKLH), 148–170 (HKCEHCGKSFPMRDLLRSHLMVH), 176–198 (YTCDQCGKGFTLKKSYNEHMNIH), 204–226 (YTCDQCGKGFPYEQSLNLHMRFH), 232–254 (FTCDQCGQSFSQKGAYNIHMKIH), 260–282 (YTCDQCGMSFRHGYSLKLHMTHH), 288–310 (FHCDQCDKCYSTALFLKNHIKTH), 316–338 (YSCLTCGKTFNQLRGLRLHEKRH), 344–366 (FMCFDCGKCYFTDTELKQHLPVH), and 372–394 (YMCSLCFKSFPRMGSLIVHEKTH).

As to expression, specifically expressed in the hematopoietic lineage during embryogenesis; first expressed at the late blastula stage around the blastoderm margin. During gastrulation, restricted to the ventral mesoderm, the presumptive prechordal plate and the dorso-marginal cells of the organizer. At the 3-somite stage, strongly expressed in a caudal domain (marking the erythroid lineage) and a cephalic domain of the lateral mesoderm. At the 8- to 10-somite stage, caudal expression is in two bands of lateral mesoderm which later converge at the midline. Anterior expression is also in two bands of lateral mesoderm which converge as two patches at the midline by the 15-somite stage, with increased scattering of single cells (macrophage precursors) away from the midline to the yolksac. Once at the yolksac, expression is lost. By 20-24 hours post-fertilization (hpf), expressed in proerythroblasts in the erythroid blood island centered above the uro-genital opening. Expression persists in circulating erythroblasts but is lost in mature erythrocytes.

This Danio rerio (Zebrafish) protein is Zinc finger protein draculin.